The chain runs to 249 residues: Probable transcriptional regulatory protein Tgr7_2237 (249 aa).

The protein belongs to the TACO1 family.

It localises to the cytoplasm. This is Probable transcriptional regulatory protein Tgr7_2237 from Thioalkalivibrio sulfidiphilus (strain HL-EbGR7).